The sequence spans 628 residues: Propionate--CoA ligase (628 aa).

It belongs to the ATP-dependent AMP-binding enzyme family.

It catalyses the reaction propanoate + ATP + CoA = propanoyl-CoA + AMP + diphosphate. It participates in organic acid metabolism; propanoate degradation. Functionally, catalyzes the synthesis of propionyl-CoA from propionate and CoA. Also converts acetate to acetyl-CoA but with a lower specific activity. The polypeptide is Propionate--CoA ligase (prpE) (Escherichia coli (strain K12)).